Consider the following 156-residue polypeptide: 6,7-dimethyl-8-ribityllumazine synthase (156 aa).

5-amino-6-(D-ribitylamino)uracil-binding positions include F25, 59–61, and 83–85; these read AFE and AVI. Position 88–89 (88–89) interacts with (2S)-2-hydroxy-3-oxobutyl phosphate; the sequence is AT. H91 (proton donor) is an active-site residue. Residue F116 coordinates 5-amino-6-(D-ribitylamino)uracil. R130 is a (2S)-2-hydroxy-3-oxobutyl phosphate binding site.

Belongs to the DMRL synthase family.

It carries out the reaction (2S)-2-hydroxy-3-oxobutyl phosphate + 5-amino-6-(D-ribitylamino)uracil = 6,7-dimethyl-8-(1-D-ribityl)lumazine + phosphate + 2 H2O + H(+). It participates in cofactor biosynthesis; riboflavin biosynthesis; riboflavin from 2-hydroxy-3-oxobutyl phosphate and 5-amino-6-(D-ribitylamino)uracil: step 1/2. Functionally, catalyzes the formation of 6,7-dimethyl-8-ribityllumazine by condensation of 5-amino-6-(D-ribitylamino)uracil with 3,4-dihydroxy-2-butanone 4-phosphate. This is the penultimate step in the biosynthesis of riboflavin. The protein is 6,7-dimethyl-8-ribityllumazine synthase of Nitratidesulfovibrio vulgaris (strain ATCC 29579 / DSM 644 / CCUG 34227 / NCIMB 8303 / VKM B-1760 / Hildenborough) (Desulfovibrio vulgaris).